We begin with the raw amino-acid sequence, 159 residues long: Transcription elongation factor GreA (159 aa).

The protein belongs to the GreA/GreB family.

In terms of biological role, necessary for efficient RNA polymerase transcription elongation past template-encoded arresting sites. The arresting sites in DNA have the property of trapping a certain fraction of elongating RNA polymerases that pass through, resulting in locked ternary complexes. Cleavage of the nascent transcript by cleavage factors such as GreA or GreB allows the resumption of elongation from the new 3'terminus. GreA releases sequences of 2 to 3 nucleotides. The protein is Transcription elongation factor GreA of Buchnera aphidicola subsp. Acyrthosiphon pisum (strain APS) (Acyrthosiphon pisum symbiotic bacterium).